We begin with the raw amino-acid sequence, 324 residues long: Acetyl-coenzyme A carboxylase carboxyl transferase subunit alpha (324 aa).

The CoA carboxyltransferase C-terminal domain occupies 37–291; the sequence is ILEDKLENLE…DLMLRKTFEQ (255 aa).

The protein belongs to the AccA family. In terms of assembly, acetyl-CoA carboxylase is a heterohexamer composed of biotin carboxyl carrier protein (AccB), biotin carboxylase (AccC) and two subunits each of ACCase subunit alpha (AccA) and ACCase subunit beta (AccD).

The protein localises to the cytoplasm. It carries out the reaction N(6)-carboxybiotinyl-L-lysyl-[protein] + acetyl-CoA = N(6)-biotinyl-L-lysyl-[protein] + malonyl-CoA. Its pathway is lipid metabolism; malonyl-CoA biosynthesis; malonyl-CoA from acetyl-CoA: step 1/1. Component of the acetyl coenzyme A carboxylase (ACC) complex. First, biotin carboxylase catalyzes the carboxylation of biotin on its carrier protein (BCCP) and then the CO(2) group is transferred by the carboxyltransferase to acetyl-CoA to form malonyl-CoA. The polypeptide is Acetyl-coenzyme A carboxylase carboxyl transferase subunit alpha (Bacillus cereus (strain Q1)).